Reading from the N-terminus, the 173-residue chain is Alpha-crystallin B chain (173 aa).

Methionine 1 carries the post-translational modification N-acetylmethionine. The region spanning 54-162 (RLPSWIESGL…PERSIPITRE (109 aa)) is the sHSP domain. Histidine 81, histidine 102, glutamate 104, and histidine 109 together coordinate Zn(2+).

This sequence belongs to the small heat shock protein (HSP20) family. As to quaternary structure, heteromer composed of three CRYAA and one CRYAB subunits. Aggregates with homologous proteins, including the small heat shock protein HSPB1, to form large heteromeric complexes. Inter-subunit bridging via zinc ions enhances stability, which is crucial as there is no protein turn over in the lens.

Its function is as follows. May contribute to the transparency and refractive index of the lens. The chain is Alpha-crystallin B chain (CRYAB) from Aquarana catesbeiana (American bullfrog).